The chain runs to 297 residues: Acetylglutamate kinase (297 aa).

Substrate is bound by residues 72-73 (GG), arginine 94, and asparagine 187.

This sequence belongs to the acetylglutamate kinase family. ArgB subfamily.

It is found in the cytoplasm. The catalysed reaction is N-acetyl-L-glutamate + ATP = N-acetyl-L-glutamyl 5-phosphate + ADP. The protein operates within amino-acid biosynthesis; L-arginine biosynthesis; N(2)-acetyl-L-ornithine from L-glutamate: step 2/4. Catalyzes the ATP-dependent phosphorylation of N-acetyl-L-glutamate. The sequence is that of Acetylglutamate kinase from Synechocystis sp. (strain ATCC 27184 / PCC 6803 / Kazusa).